The following is a 176-amino-acid chain: NAD(P)H-quinone oxidoreductase subunit 6, chloroplastic (176 aa).

5 consecutive transmembrane segments (helical) span residues 10-30, 32-52, 61-81, 92-112, and 152-172; these read ILLV…VLLT, PIYS…FHIP, AQLL…VMFM, LWTV…FSLI, and FYLP…GAIS.

Belongs to the complex I subunit 6 family. NDH is composed of at least 16 different subunits, 5 of which are encoded in the nucleus.

It is found in the plastid. The protein resides in the chloroplast thylakoid membrane. The enzyme catalyses a plastoquinone + NADH + (n+1) H(+)(in) = a plastoquinol + NAD(+) + n H(+)(out). It carries out the reaction a plastoquinone + NADPH + (n+1) H(+)(in) = a plastoquinol + NADP(+) + n H(+)(out). In terms of biological role, NDH shuttles electrons from NAD(P)H:plastoquinone, via FMN and iron-sulfur (Fe-S) centers, to quinones in the photosynthetic chain and possibly in a chloroplast respiratory chain. The immediate electron acceptor for the enzyme in this species is believed to be plastoquinone. Couples the redox reaction to proton translocation, and thus conserves the redox energy in a proton gradient. The chain is NAD(P)H-quinone oxidoreductase subunit 6, chloroplastic (ndhG) from Liriodendron tulipifera (Tuliptree).